Here is a 35-residue protein sequence, read N- to C-terminus: uncharacterized protein (35 aa).

Residues 1–27 are compositionally biased toward low complexity; that stretch reads MDQNEANIYNENNENNENNENENCQNE. Residues 1 to 35 form a disordered region; the sequence is MDQNEANIYNENNENNENNENENCQNEPIRIKIII.

This is an uncharacterized protein from Dictyostelium discoideum (Social amoeba).